Consider the following 317-residue polypeptide: Acetyl-coenzyme A carboxylase carboxyl transferase subunit alpha (317 aa).

A CoA carboxyltransferase C-terminal domain is found at 41–291; it reads KVDKLLRSTY…SMALDSALRD (251 aa).

The protein belongs to the AccA family. In terms of assembly, acetyl-CoA carboxylase is a heterohexamer composed of biotin carboxyl carrier protein (AccB), biotin carboxylase (AccC) and two subunits each of ACCase subunit alpha (AccA) and ACCase subunit beta (AccD).

The protein localises to the cytoplasm. It carries out the reaction N(6)-carboxybiotinyl-L-lysyl-[protein] + acetyl-CoA = N(6)-biotinyl-L-lysyl-[protein] + malonyl-CoA. It participates in lipid metabolism; malonyl-CoA biosynthesis; malonyl-CoA from acetyl-CoA: step 1/1. Functionally, component of the acetyl coenzyme A carboxylase (ACC) complex. First, biotin carboxylase catalyzes the carboxylation of biotin on its carrier protein (BCCP) and then the CO(2) group is transferred by the carboxyltransferase to acetyl-CoA to form malonyl-CoA. The chain is Acetyl-coenzyme A carboxylase carboxyl transferase subunit alpha from Paramagnetospirillum magneticum (strain ATCC 700264 / AMB-1) (Magnetospirillum magneticum).